Reading from the N-terminus, the 91-residue chain is Small ribosomal subunit protein bS20 (91 aa).

2 disordered regions span residues 1 to 26 (MALRHKSAQKRHRQSLKRRMLNRSRK) and 67 to 91 (HKNAAARKKSRLAKAINRVKAAQQS).

It belongs to the bacterial ribosomal protein bS20 family.

In terms of biological role, binds directly to 16S ribosomal RNA. This is Small ribosomal subunit protein bS20 from Deinococcus deserti (strain DSM 17065 / CIP 109153 / LMG 22923 / VCD115).